Reading from the N-terminus, the 267-residue chain is Interleukin-1 alpha (267 aa).

The propeptide occupies 1 to 112 (MAKVPDLFED…DPEEGIIKPR (112 aa)). N64 is a glycosylation site (N-linked (GlcNAc...) asparagine). The residue at position 82 (K82) is an N6-acetyllysine. Residues 82 to 86 (KKRRL) form a nuclear localization signal (NLS) region. Residue S87 is modified to Phosphoserine. N-linked (GlcNAc...) asparagine glycosylation is found at N100 and N141.

Belongs to the IL-1 family. Monomer. Interacts with TMED10; the interaction mediates the translocation from the cytoplasm into the ERGIC (endoplasmic reticulum-Golgi intermediate compartment) and thereby secretion. Interacts with IL1R1. Interacts with S100A13; this interaction is the first step in the export of IL1A, followed by direct translocation of this complex across the plasma membrane. In terms of processing, acetylated within its nuclear localization sequence, which impacts subcellular localization. Post-translationally, proteolytic processed by CAPN1 in a calcium-dependent manner. Cleavage from 31 kDa precursor to 18 kDa biologically active molecules. Phosphorylated. Phosphorylation greatly enhances susceptibility to digestion and promotes the conversion of pre-IL1A alpha to the biologically active IL1A.

The protein localises to the nucleus. It localises to the cytoplasm. The protein resides in the secreted. Functionally, cytokine constitutively present intracellularly in nearly all resting non-hematopoietic cells that plays an important role in inflammation and bridges the innate and adaptive immune systems. After binding to its receptor IL1R1 together with its accessory protein IL1RAP, forms the high affinity interleukin-1 receptor complex. Signaling involves the recruitment of adapter molecules such as MYD88, IRAK1 or IRAK4. In turn, mediates the activation of NF-kappa-B and the three MAPK pathways p38, p42/p44 and JNK pathways. Within the cell, acts as an alarmin and cell death results in its liberation in the extracellular space after disruption of the cell membrane to induce inflammation and alert the host to injury or damage. In addition to its role as a danger signal, which occurs when the cytokine is passively released by cell necrosis, directly senses DNA damage and acts as signal for genotoxic stress without loss of cell integrity. The chain is Interleukin-1 alpha (IL1A) from Oryctolagus cuniculus (Rabbit).